Here is a 170-residue protein sequence, read N- to C-terminus: Ribosome maturation factor RimP (170 aa).

Belongs to the RimP family.

The protein localises to the cytoplasm. Functionally, required for maturation of 30S ribosomal subunits. The chain is Ribosome maturation factor RimP from Chlorobaculum parvum (strain DSM 263 / NCIMB 8327) (Chlorobium vibrioforme subsp. thiosulfatophilum).